A 182-amino-acid polypeptide reads, in one-letter code: MAEFPSKVSTRTSSPAQGAEASVSALRPDLGFVRSRLGALMLLQLVLGLLVWALIADTPYHLYPAYGWVMFVAVFLWLVTIVLFNLYLFQLHMKLYMVPWPLVLMIFNISATVLYITAFIACSAAVDLTSLRGTRPYNQRAAASFFACLVMIAYGVSAFFSYQAWRGVGSNAATSQMAGGYA.

Residues 1-35 lie on the Cytoplasmic side of the membrane; the sequence is MAEFPSKVSTRTSSPAQGAEASVSALRPDLGFVRS. At Ser-9 the chain carries Phosphoserine. The region spanning 32–166 is the MARVEL domain; the sequence is FVRSRLGALM…SAFFSYQAWR (135 aa). The helical transmembrane segment at 36 to 56 threads the bilayer; that stretch reads RLGALMLLQLVLGLLVWALIA. Over 57-68 the chain is Extracellular; sequence DTPYHLYPAYGW. A helical membrane pass occupies residues 69-89; sequence VMFVAVFLWLVTIVLFNLYLF. Over 90–99 the chain is Cytoplasmic; that stretch reads QLHMKLYMVP. Residues 100–120 form a helical membrane-spanning segment; the sequence is WPLVLMIFNISATVLYITAFI. Residues 121–141 lie on the Extracellular side of the membrane; the sequence is ACSAAVDLTSLRGTRPYNQRA. Residues 142 to 162 traverse the membrane as a helical segment; that stretch reads AASFFACLVMIAYGVSAFFSY. Topologically, residues 163 to 182 are cytoplasmic; the sequence is QAWRGVGSNAATSQMAGGYA.

Belongs to the MAL family. Forms oligomers. Phosphorylated.

The protein localises to the cell membrane. The protein resides in the myelin membrane. It is found in the apical cell membrane. Its subcellular location is the golgi apparatus. Functionally, main component of the myelin sheath that plays an important role in myelin membrane biogenesis and myelination. Plays an essential function in apical endocytosis. Regulates epithelial development through the regulation of apical endocytosis. Part of the intracellular machinery that mediates basolateral-to-apical transport of ICAM-1, an essential adhesion receptor in epithelial cells, from the subapical compartment in hepatic epithelial cells. The sequence is that of Plasmolipin from Homo sapiens (Human).